The sequence spans 343 residues: Heat-inducible transcription repressor HrcA (343 aa).

It belongs to the HrcA family.

Functionally, negative regulator of class I heat shock genes (grpE-dnaK-dnaJ and groELS operons). Prevents heat-shock induction of these operons. The sequence is that of Heat-inducible transcription repressor HrcA from Mycoplasma genitalium (strain ATCC 33530 / DSM 19775 / NCTC 10195 / G37) (Mycoplasmoides genitalium).